A 151-amino-acid polypeptide reads, in one-letter code: Macrodomain Ter protein (151 aa).

This sequence belongs to the MatP family. In terms of assembly, homodimer.

It is found in the cytoplasm. In terms of biological role, required for spatial organization of the terminus region of the chromosome (Ter macrodomain) during the cell cycle. Prevents early segregation of duplicated Ter macrodomains during cell division. Binds specifically to matS, which is a 13 bp signature motif repeated within the Ter macrodomain. In Cronobacter sakazakii (strain ATCC BAA-894) (Enterobacter sakazakii), this protein is Macrodomain Ter protein.